Consider the following 294-residue polypeptide: 4-hydroxy-tetrahydrodipicolinate synthase (294 aa).

Thr-44 is a pyruvate binding site. Residue Tyr-132 is the Proton donor/acceptor of the active site. The Schiff-base intermediate with substrate role is filled by Lys-160. Val-202 contributes to the pyruvate binding site.

Belongs to the DapA family. As to quaternary structure, homotetramer; dimer of dimers.

It is found in the cytoplasm. The enzyme catalyses L-aspartate 4-semialdehyde + pyruvate = (2S,4S)-4-hydroxy-2,3,4,5-tetrahydrodipicolinate + H2O + H(+). The protein operates within amino-acid biosynthesis; L-lysine biosynthesis via DAP pathway; (S)-tetrahydrodipicolinate from L-aspartate: step 3/4. Catalyzes the condensation of (S)-aspartate-beta-semialdehyde [(S)-ASA] and pyruvate to 4-hydroxy-tetrahydrodipicolinate (HTPA). The protein is 4-hydroxy-tetrahydrodipicolinate synthase of Leptospira borgpetersenii serovar Hardjo-bovis (strain JB197).